The chain runs to 224 residues: Uridylate kinase (224 aa).

8-12 (KITGK) is a binding site for ATP. Residue Gly43 participates in UMP binding. Residues Gly44 and Arg48 each contribute to the ATP site. UMP contacts are provided by residues Asp66 and 114 to 120 (LIPGQST). Residues Ser140, Tyr146, and Asp149 each coordinate ATP.

This sequence belongs to the UMP kinase family. As to quaternary structure, homohexamer.

The protein resides in the cytoplasm. The enzyme catalyses UMP + ATP = UDP + ADP. It functions in the pathway pyrimidine metabolism; CTP biosynthesis via de novo pathway; UDP from UMP (UMPK route): step 1/1. Its activity is regulated as follows. Inhibited by UTP. Catalyzes the reversible phosphorylation of UMP to UDP. This Staphylothermus marinus (strain ATCC 43588 / DSM 3639 / JCM 9404 / F1) protein is Uridylate kinase.